The primary structure comprises 1085 residues: Solute carrier family 12 member 4 (1085 aa).

The Cytoplasmic portion of the chain corresponds to M1–G119. Phosphoserine is present on residues S24, S47, S81, and S88. The discontinuously helical transmembrane segment at T120 to L141 threads the bilayer. K(+)-binding residues include N131 and I132. At T142 to G149 the chain is on the extracellular side. The chain crosses the membrane as a helical span at residues V150–S172. The Cytoplasmic portion of the chain corresponds to A173–E196. A helical membrane pass occupies residues F197–L225. Y216 lines the K(+) pocket. At T226–L248 the chain is on the extracellular side. 2 helical membrane-spanning segments follow: residues N249–K271 and Y272–K297. The Extracellular segment spans residues S298–S419. A disulfide bridge connects residues C308 and C323. N-linked (GlcNAc...) asparagine glycans are attached at residues N312, N331, and N347. Cysteines 343 and 353 form a disulfide. The helical transmembrane segment at F420–R440 threads the bilayer. Positions 429 and 432 each coordinate K(+). 3 residues coordinate chloride: G433, I434, and M435. The Cytoplasmic segment spans residues S441–S450. A helical membrane pass occupies residues I451 to F473. Over G474 to P504 the chain is Extracellular. The chain crosses the membrane as a helical span at residues W505–Q531. The Cytoplasmic segment spans residues A532–P554. Helical transmembrane passes span T555–D575 and M576–V598. A chloride-binding site is contributed by Y589. Over Q599–K612 the chain is Cytoplasmic. Helical transmembrane passes span Y613–W635 and Y636–Y651. At I652–S1085 the chain is on the cytoplasmic side. The tract at residues I665–E681 is scissor helix. ATP-binding residues include L697, K699, K707, Y708, and V730. A Phosphoserine modification is found at S734. The ATP site is built by G794, W795, and Y797. Phosphoserine occurs at positions 916 and 967. Residue T983 is modified to Phosphothreonine. Position 1050 is a phosphoserine (S1050).

It belongs to the SLC12A transporter family. K/Cl co-transporter subfamily. Homodimer; adopts a domain-swap conformation at the scissor helices connecting the transmembrane domain and C-terminal domain. Heterodimer with other K-Cl cotransporters. Phosphorylated, phosphorylation may regulate transporter activity. As to expression, detected in embryo, adult heart, erythrocytes, brain, kidney, stomach, ovary, testis and liver.

It is found in the cell membrane. The catalysed reaction is K(+)(in) + chloride(in) = K(+)(out) + chloride(out). Its activity is regulated as follows. Inhibited by WNK3. Its function is as follows. Mediates electroneutral potassium-chloride cotransport when activated by cell swelling. May contribute to cell volume homeostasis in single cells. May be involved in the regulation of basolateral Cl(-) exit in NaCl absorbing epithelia. This is Solute carrier family 12 member 4 (Slc12a4) from Mus musculus (Mouse).